A 169-amino-acid chain; its full sequence is ATP synthase subunit b (169 aa).

The helical transmembrane segment at F26 to P46 threads the bilayer.

This sequence belongs to the ATPase B chain family. In terms of assembly, F-type ATPases have 2 components, F(1) - the catalytic core - and F(0) - the membrane proton channel. F(1) has five subunits: alpha(3), beta(3), gamma(1), delta(1), epsilon(1). F(0) has three main subunits: a(1), b(2) and c(10-14). The alpha and beta chains form an alternating ring which encloses part of the gamma chain. F(1) is attached to F(0) by a central stalk formed by the gamma and epsilon chains, while a peripheral stalk is formed by the delta and b chains.

The protein resides in the cell membrane. Its function is as follows. F(1)F(0) ATP synthase produces ATP from ADP in the presence of a proton or sodium gradient. F-type ATPases consist of two structural domains, F(1) containing the extramembraneous catalytic core and F(0) containing the membrane proton channel, linked together by a central stalk and a peripheral stalk. During catalysis, ATP synthesis in the catalytic domain of F(1) is coupled via a rotary mechanism of the central stalk subunits to proton translocation. Functionally, component of the F(0) channel, it forms part of the peripheral stalk, linking F(1) to F(0). The polypeptide is ATP synthase subunit b (Mycobacterium sp. (strain JLS)).